The following is a 702-amino-acid chain: MYGLIIDHIATYIKEKYGESTWSEVKFVSGVTDDTFQMDKKFSEGLSHKLIWACHDVTGDPVDELMTNIGTSFYKFLTKFEFNKVLRVLGRTFPQFLNGLDNLHEYLRFTFPKLKPPSFYCEHESRTGLTLHYRSKRRGFLHYVQGQIRNISQELFQTEVVIELLDIEHDLNLEHVIMRLHFNNLDFNRQGTAYRNLNDSILEKVKITSDIFFDIFPFIIVFNRGMRIRNIGIGLLRVMAGIVGKKINQTFLLMRPFIRFRWEEIMLHSNNIFELISSDPIQEDEDGILVYKTTDVDQMTEERHRMGDGEREKFLSLKGQMFYMEEWESICFVGIPVMSHLPQMYKSGLFINDFALHDSSRDLVLASTQQSAELKLLLHQEAQKSRNMRENMNRLKKERRRTDKLLYQMLPKSVANQLRHGESAVACCERFDSVTILFTDIVEFTKMCSSLTPLEVIEFLKVIYTNFDKIIDTHGVYKVETIGDAYMVVSGAPTKTEHDAEFILDCASQFLVEAGKMVNMNNKIHKIDIRAGVHSGSVVAGVVGLSMPRYCLFGETVYVANKMEQNSSPMKILVSETTHNKIEESDPGLYQFERREEIEIKDDQTIQTFFVVSRHGPHRVPSPRNCESRQDDSQTEDDDDDELLLPRKSGRKSPTSEAEEELKKKGQLSFTPVSDAGIECHSRNSNKTPRQSQDLTPRKSIT.

H104 serves as a coordination point for heme. Positions 368-406 (TQQSAELKLLLHQEAQKSRNMRENMNRLKKERRRTDKLL) form a coiled coil. In terms of domain architecture, Guanylate cyclase spans 435–564 (TILFTDIVEF…ETVYVANKME (130 aa)). Residues D440 and D484 each coordinate Mg(2+). The interval 614–702 (RHGPHRVPSP…QDLTPRKSIT (89 aa)) is disordered. The segment covering 633–643 (SQTEDDDDDEL) has biased composition (acidic residues). Over residues 683–695 (RNSNKTPRQSQDL) the composition is skewed to polar residues.

Belongs to the adenylyl cyclase class-4/guanylyl cyclase family. In terms of assembly, heterodimer; with other soluble guanylate cyclases. Heme is required as a cofactor. As to expression, expressed in a pair of bilaterally symmetric neurons in the head.

Its subcellular location is the cytoplasm. It carries out the reaction GTP = 3',5'-cyclic GMP + diphosphate. With respect to regulation, may be regulated by molecular oxygen. Probably not activated by nitric oxide (NO). Synthesizes cyclic GMP (cGMP) from GTP. May play a role in embryogenesis. This Caenorhabditis elegans protein is Soluble guanylate cyclase gcy-31 (gcy-31).